Consider the following 372-residue polypeptide: Type II methyltransferase M1.HphI (372 aa).

The SAM-dependent MTase C5-type domain occupies 45 to 372 (LTYIDLFSGA…EAVLKMNTNE (328 aa)). Cys-122 is an active-site residue.

It belongs to the class I-like SAM-binding methyltransferase superfamily. C5-methyltransferase family.

It carries out the reaction a 2'-deoxycytidine in DNA + S-adenosyl-L-methionine = a 5-methyl-2'-deoxycytidine in DNA + S-adenosyl-L-homocysteine + H(+). A methylase that recognizes the double-stranded sequence 5'-GGTGA-3' and protects the DNA from cleavage by the HphI endonuclease. Probably methylates C-2 on the bottom strand. The chain is Type II methyltransferase M1.HphI (hphIAM) from Haemophilus parahaemolyticus.